The sequence spans 391 residues: UPF0229 protein CLL_A3091 (391 aa).

Disordered stretches follow at residues 1 to 23 (MAIFRDRTDKQVDHDRAIEDKRR) and 75 to 107 (VATGTGEEKRGDKIESGSKKAMGKGNKGAGNEE). Over residues 80 to 92 (GEEKRGDKIESGS) the composition is skewed to basic and acidic residues.

This sequence belongs to the UPF0229 family.

The sequence is that of UPF0229 protein CLL_A3091 from Clostridium botulinum (strain Eklund 17B / Type B).